The primary structure comprises 406 residues: Methyltransferase cfoD (406 aa).

Residues D270 and R312 each contribute to the S-adenosyl-L-methionine site. The Proton acceptor role is filled by H315.

The protein belongs to the class I-like SAM-binding methyltransferase superfamily. Cation-independent O-methyltransferase family.

It participates in secondary metabolite biosynthesis; flavonoid biosynthesis. In terms of biological role, methyltransferase; part of the gene cluster that mediates the biosynthesis of chlorflavonin, a fungal flavonoid with acetolactate synthase inhibitory activity. Within the pathway, cfoD is responsible for the methylation at position C3-OH of flavonoid. The pathway begins with the PKS-NRPS hybrid synthetase cfoA that uses benzoic acid or p-hydroxybenzoic acid as a starter unit with four rounds of chain elongation using malonyl-CoA to form the chalcone skeleton. Then, a new type of chalcone isomerase, cfoK, catalyzes the conversion of the chalcone into a flavanone by a histidine-mediated oxa-Michael addition mechanism. The desaturation of flavanone to flavone is catalyzed by a new type of flavone synthase, the flavin mononucleotide (FMN)-dependent oxidoreductase cfoJ. Monooxygenases cfoF, cfoG, and P450 cfoH are responsible for the hydroxylation of the flavonoid skeleton at sites C3, C8, and C2', respectively. Like cfoF, the dehydratase cfoI also plays a role in the hydroxylation of position C3. Methyltransferases cfoB, cfoC, and cfoD then catalyze the methylation of C7-OH, C8-OH, and C3-OH, respectively. Finally, the monooxygenase cfoE is responsible for the chlorination of flavonoid at position C3'. The polypeptide is Methyltransferase cfoD (Aspergillus candidus).